The primary structure comprises 658 residues: Biosynthetic arginine decarboxylase (658 aa).

Lys-127 bears the N6-(pyridoxal phosphate)lysine mark. 307–317 (FDVGGGLGVDY) contributes to the substrate binding site.

Belongs to the Orn/Lys/Arg decarboxylase class-II family. SpeA subfamily. Requires Mg(2+) as cofactor. The cofactor is pyridoxal 5'-phosphate.

It carries out the reaction L-arginine + H(+) = agmatine + CO2. It participates in amine and polyamine biosynthesis; agmatine biosynthesis; agmatine from L-arginine: step 1/1. Catalyzes the biosynthesis of agmatine from arginine. This is Biosynthetic arginine decarboxylase from Salmonella typhi.